Here is a 371-residue protein sequence, read N- to C-terminus: Alanine racemase (371 aa).

Lysine 40 functions as the Proton acceptor; specific for D-alanine in the catalytic mechanism. Lysine 40 bears the N6-(pyridoxal phosphate)lysine mark. Residue arginine 138 coordinates substrate. The active-site Proton acceptor; specific for L-alanine is tyrosine 267. Methionine 314 lines the substrate pocket.

The protein belongs to the alanine racemase family. Pyridoxal 5'-phosphate is required as a cofactor.

It catalyses the reaction L-alanine = D-alanine. Its pathway is amino-acid biosynthesis; D-alanine biosynthesis; D-alanine from L-alanine: step 1/1. Catalyzes the interconversion of L-alanine and D-alanine. May also act on other amino acids. This Ligilactobacillus salivarius (strain UCC118) (Lactobacillus salivarius) protein is Alanine racemase (alr).